The following is a 1013-amino-acid chain: Probable beta-galactosidase B (1013 aa).

Residues 1–21 (MTRILNCLLVLLACLGVSSKA) form the signal peptide. A substrate-binding site is contributed by tyrosine 90. Asparagine 100 is a glycosylation site (N-linked (GlcNAc...) asparagine). The substrate site is built by asparagine 135, alanine 136, glutamate 137, and asparagine 195. The active-site Proton donor is the glutamate 196. A glycan (N-linked (GlcNAc...) asparagine) is linked at asparagine 211. Tyrosine 265 is a substrate binding site. A disulfide bridge connects residues cysteine 271 and cysteine 324. Glutamate 308 functions as the Nucleophile in the catalytic mechanism. Tyrosine 373 is a binding site for substrate. N-linked (GlcNAc...) asparagine glycosylation is found at asparagine 411, asparagine 442, asparagine 456, asparagine 626, asparagine 735, asparagine 768, and asparagine 775.

Belongs to the glycosyl hydrolase 35 family.

It is found in the secreted. It carries out the reaction Hydrolysis of terminal non-reducing beta-D-galactose residues in beta-D-galactosides.. Functionally, cleaves beta-linked terminal galactosyl residues from gangliosides, glycoproteins, and glycosaminoglycans. The sequence is that of Probable beta-galactosidase B (lacB) from Penicillium rubens (strain ATCC 28089 / DSM 1075 / NRRL 1951 / Wisconsin 54-1255) (Penicillium chrysogenum).